Consider the following 239-residue polypeptide: Hydroxyacylglutathione hydrolase (239 aa).

The Zn(2+) site is built by His-54, His-56, Asp-58, His-59, His-112, Asp-131, and His-169.

It belongs to the metallo-beta-lactamase superfamily. Glyoxalase II family. As to quaternary structure, monomer. The cofactor is Zn(2+).

It catalyses the reaction an S-(2-hydroxyacyl)glutathione + H2O = a 2-hydroxy carboxylate + glutathione + H(+). Its pathway is secondary metabolite metabolism; methylglyoxal degradation; (R)-lactate from methylglyoxal: step 2/2. Thiolesterase that catalyzes the hydrolysis of S-D-lactoyl-glutathione to form glutathione and D-lactic acid. In Pelagibacter ubique (strain HTCC1062), this protein is Hydroxyacylglutathione hydrolase.